A 711-amino-acid chain; its full sequence is MLNPIVRKFQYGQHTVTLETGMMARQATAAVMVSMDDTAVFVTVVGQKKAKPGQDFFPLTVNYQERTYAAGRIPGSFFRREGRPSEGETLIARLIDRPIRPLFPEGFVNEVQVIATVVSVNPQVNPDIVAMIGASAALSLSGIPFNGPIGAARVGYINDQYVLNPTQDELKESKLDLVVAGTEAAVLMVESEAELLSEDQMLGAVVFGHEQQQVVIQNINELVKEAGKPRWDWQPEPVNEALNARVAALAEARLSDAYRITDKQERYAQVDVIKSETIATLLAEDETLDENELGEILHAIEKNVVRSRVLAGEPRIDGREKDMIRGLDVRTGVLPRTHGSALFTRGETQALVTATLGTARDAQVLDELMGERTDTFLFHYNFPPYSVGETGMVGSPKRREIGHGRLAKRGVLAVMPDMDKFPYTVRVVSEITESNGSSSMASVCGASLALMDAGVPIKAAVAGIAMGLVKEGDNYVVLSDILGDEDHLGDMDFKVAGSRDGISALQMDIKIEGITKEIMQVALNQAKGARLHILGVMEQAINAPRGDISEFAPRIHTIKINPDKIKDVIGKGGSVIRALTEETGTTIEIEDDGTVKIAATDGEKAKHAIRRIEEITAEIEVGRVYTGKVTRIVDFGAFVAIGGGKEGLVHISQIADKRVEKVTDYLQMGQEVPVKVLEVDRQGRIRLSIKEATEQSQPAAAPEAPAAEQGE.

Residues Asp-486 and Asp-492 each coordinate Mg(2+). One can recognise a KH domain in the interval 553–612; sequence PRIHTIKINPDKIKDVIGKGGSVIRALTEETGTTIEIEDDGTVKIAATDGEKAKHAIRRI. Residues 622-690 enclose the S1 motif domain; that stretch reads GRVYTGKVTR…RQGRIRLSIK (69 aa). The tract at residues 689–711 is disordered; that stretch reads IKEATEQSQPAAAPEAPAAEQGE. The span at 694–711 shows a compositional bias: low complexity; that stretch reads EQSQPAAAPEAPAAEQGE.

It belongs to the polyribonucleotide nucleotidyltransferase family. As to quaternary structure, component of the RNA degradosome, which is a multiprotein complex involved in RNA processing and mRNA degradation. The cofactor is Mg(2+).

The protein localises to the cytoplasm. The catalysed reaction is RNA(n+1) + phosphate = RNA(n) + a ribonucleoside 5'-diphosphate. Its function is as follows. Involved in mRNA degradation. Catalyzes the phosphorolysis of single-stranded polyribonucleotides processively in the 3'- to 5'-direction. In Escherichia coli (strain SE11), this protein is Polyribonucleotide nucleotidyltransferase.